The following is a 241-amino-acid chain: ATP synthase subunit a (241 aa).

Helical transmembrane passes span 30–50 (GQIF…VLVG), 89–109 (LPFI…GALI), 128–148 (INTT…AGLS), 193–213 (LAVG…VMLL), and 214–234 (GLFT…FYIG).

The protein belongs to the ATPase A chain family. In terms of assembly, F-type ATPases have 2 components, CF(1) - the catalytic core - and CF(0) - the membrane proton channel. CF(1) has five subunits: alpha(3), beta(3), gamma(1), delta(1), epsilon(1). CF(0) has four main subunits: a, b, b' and c.

It is found in the cellular thylakoid membrane. Its function is as follows. Key component of the proton channel; it plays a direct role in the translocation of protons across the membrane. This chain is ATP synthase subunit a, found in Synechococcus sp. (strain CC9311).